The primary structure comprises 284 residues: Bifunctional protein FolD (284 aa).

NADP(+)-binding positions include 166–168 and Ser191; that span reads GRS.

The protein belongs to the tetrahydrofolate dehydrogenase/cyclohydrolase family. As to quaternary structure, homodimer.

The enzyme catalyses (6R)-5,10-methylene-5,6,7,8-tetrahydrofolate + NADP(+) = (6R)-5,10-methenyltetrahydrofolate + NADPH. It catalyses the reaction (6R)-5,10-methenyltetrahydrofolate + H2O = (6R)-10-formyltetrahydrofolate + H(+). It participates in one-carbon metabolism; tetrahydrofolate interconversion. Catalyzes the oxidation of 5,10-methylenetetrahydrofolate to 5,10-methenyltetrahydrofolate and then the hydrolysis of 5,10-methenyltetrahydrofolate to 10-formyltetrahydrofolate. This is Bifunctional protein FolD from Leptospira borgpetersenii serovar Hardjo-bovis (strain JB197).